The following is a 121-amino-acid chain: Large ribosomal subunit protein uL18 (121 aa).

The protein belongs to the universal ribosomal protein uL18 family. In terms of assembly, part of the 50S ribosomal subunit; part of the 5S rRNA/L5/L18/L25 subcomplex. Contacts the 5S and 23S rRNAs.

Its function is as follows. This is one of the proteins that bind and probably mediate the attachment of the 5S RNA into the large ribosomal subunit, where it forms part of the central protuberance. The chain is Large ribosomal subunit protein uL18 from Ehrlichia canis (strain Jake).